A 263-amino-acid chain; its full sequence is Endonuclease 8 (263 aa).

Residue Pro-2 is the Schiff-base intermediate with DNA of the active site. The Proton donor role is filled by Glu-3. The active-site Proton donor; for beta-elimination activity is Lys-53. Gln-70, Arg-125, and Asn-169 together coordinate DNA. The segment at 229–263 (KVFHRDGEPCERCGSIIEKTTLSSRPFYWCPGCQH) adopts an FPG-type zinc-finger fold. Arg-253 functions as the Proton donor; for delta-elimination activity in the catalytic mechanism.

This sequence belongs to the FPG family. Zn(2+) serves as cofactor.

The catalysed reaction is 2'-deoxyribonucleotide-(2'-deoxyribose 5'-phosphate)-2'-deoxyribonucleotide-DNA = a 3'-end 2'-deoxyribonucleotide-(2,3-dehydro-2,3-deoxyribose 5'-phosphate)-DNA + a 5'-end 5'-phospho-2'-deoxyribonucleoside-DNA + H(+). Involved in base excision repair of DNA damaged by oxidation or by mutagenic agents. Acts as a DNA glycosylase that recognizes and removes damaged bases. Has a preference for oxidized pyrimidines, such as thymine glycol, 5,6-dihydrouracil and 5,6-dihydrothymine. Has AP (apurinic/apyrimidinic) lyase activity and introduces nicks in the DNA strand. Cleaves the DNA backbone by beta-delta elimination to generate a single-strand break at the site of the removed base with both 3'- and 5'-phosphates. This chain is Endonuclease 8, found in Shigella sonnei (strain Ss046).